Here is an 82-residue protein sequence, read N- to C-terminus: Small ribosomal subunit protein uS17 (82 aa).

It belongs to the universal ribosomal protein uS17 family. As to quaternary structure, part of the 30S ribosomal subunit.

In terms of biological role, one of the primary rRNA binding proteins, it binds specifically to the 5'-end of 16S ribosomal RNA. In Ehrlichia ruminantium (strain Gardel), this protein is Small ribosomal subunit protein uS17.